The sequence spans 1081 residues: Zinc finger protein 827 (1081 aa).

Basic and acidic residues predominate over residues 1–10; the sequence is MPRRKQEQPK. Residues 1 to 14 are mediates direct interaction with RBBP4; it reads MPRRKQEQPKRLPS. A disordered region spans residues 1–77; that stretch reads MPRRKQEQPK…DTSLGSTTPS (77 aa). The RRK motif; mediates NuRD recruitment to telomeres signature appears at 3 to 5; sequence RRK. A compositionally biased stretch (polar residues) spans 62–77; the sequence is EQSTSPDTSLGSTTPS. Glycyl lysine isopeptide (Lys-Gly) (interchain with G-Cter in SUMO2) cross-links involve residues Lys-176, Lys-216, and Lys-226. Disordered stretches follow at residues 258–280 and 305–348; these read KKVS…SFLS and EKSS…SLEL. The span at 327-344 shows a compositional bias: pro residues; that stretch reads VSPPPPPPPPPPPPPPPQ. Residues Lys-360 and Lys-372 each participate in a glycyl lysine isopeptide (Lys-Gly) (interchain with G-Cter in SUMO2) cross-link. C2H2-type zinc fingers lie at residues 374–396, 402–424, and 433–455; these read FQCP…MVIH, HQCP…MKVH, and FQCQ…MRCH. Residues Lys-466, Lys-475, Lys-523, Lys-549, Lys-580, Lys-587, and Lys-597 each participate in a glycyl lysine isopeptide (Lys-Gly) (interchain with G-Cter in SUMO2) cross-link. The disordered stretch occupies residues 525-553; sequence EPKEDNGLPTSFTLNTADRPANHTKLKDP. A compositionally biased stretch (polar residues) spans 616–627; that stretch reads VFSPESEVSTPG. The interval 616 to 640 is disordered; that stretch reads VFSPESEVSTPGVSEDALKPQEGKG. The segment covering 631–640 has biased composition (basic and acidic residues); the sequence is DALKPQEGKG. Residues Lys-634, Lys-639, and Lys-658 each participate in a glycyl lysine isopeptide (Lys-Gly) (interchain with G-Cter in SUMO2) cross-link. Lys-673 participates in a covalent cross-link: Glycyl lysine isopeptide (Lys-Gly) (interchain with G-Cter in SUMO1); alternate. Lys-673 is covalently cross-linked (Glycyl lysine isopeptide (Lys-Gly) (interchain with G-Cter in SUMO2); alternate). Glycyl lysine isopeptide (Lys-Gly) (interchain with G-Cter in SUMO2) cross-links involve residues Lys-704, Lys-710, Lys-742, Lys-778, and Lys-798. 2 C2H2-type zinc fingers span residues 817–839 and 845–867; these read FPCD…LSLH and YKCH…LTVH. Glycyl lysine isopeptide (Lys-Gly) (interchain with G-Cter in SUMO2) cross-links involve residues Lys-870 and Lys-891. 2 consecutive C2H2-type zinc fingers follow at residues 897 to 919 and 929 to 952; these read YSCH…MSLH and ICCT…GTKH. The segment covering 947–960 has biased composition (basic and acidic residues); that stretch reads HIGTKHTGEDRKTP. Residues 947–1013 are disordered; sequence HIGTKHTGED…GSQPSLNSEE (67 aa). A Glycyl lysine isopeptide (Lys-Gly) (interchain with G-Cter in SUMO2) cross-link involves residue Lys-958. Low complexity predominate over residues 961–978; that stretch reads SESNSPSSSSLSALSDSA. Residues 979-988 are compositionally biased toward basic and acidic residues; that stretch reads NSKDDSDGSQ. Lys-1014 participates in a covalent cross-link: Glycyl lysine isopeptide (Lys-Gly) (interchain with G-Cter in SUMO2). 2 consecutive C2H2-type zinc fingers follow at residues 1019-1041 and 1047-1069; these read FECV…LQIH and FECD…KKCH.

This sequence belongs to the krueppel C2H2-type zinc-finger protein family. As to quaternary structure, part of a transcription inhibitory ribonucleoprotein complex composed at least of the circular RNA circZNF827, HNRNPK and HNRNPL. Interacts with the nucleosome remodeling and histone deacetylase/NuRD complex. Interacts with RBBP4; the interaction is direct and recruits RBBP4, a component of the NuRD complex, to telomeres.

It localises to the nucleus. The protein localises to the chromosome. Its subcellular location is the telomere. As part of a ribonucleoprotein complex composed at least of HNRNPK, HNRNPL and the circular RNA circZNF827 that nucleates the complex on chromatin, may negatively regulate the transcription of genes involved in neuronal differentiation. Could also recruit the nucleosome remodeling and histone deacetylase/NuRD complex to telomeric regions of chromosomes to regulate chromatin remodeling as part of telomere maintenance. This is Zinc finger protein 827 (ZNF827) from Macaca fascicularis (Crab-eating macaque).